The chain runs to 435 residues: Histidine--tRNA ligase (435 aa).

Residues 415 to 435 (SVPLSAFPGDYDRPTFEDFAE) are disordered. Positions 424–435 (DYDRPTFEDFAE) are enriched in basic and acidic residues.

It belongs to the class-II aminoacyl-tRNA synthetase family.

Its subcellular location is the cytoplasm. It catalyses the reaction tRNA(His) + L-histidine + ATP = L-histidyl-tRNA(His) + AMP + diphosphate + H(+). The polypeptide is Histidine--tRNA ligase (Haloarcula marismortui (strain ATCC 43049 / DSM 3752 / JCM 8966 / VKM B-1809) (Halobacterium marismortui)).